The sequence spans 786 residues: Endonuclease MutS2 (786 aa).

332-339 (GPNTGGKT) is an ATP binding site. The Smr domain occupies 710 to 785 (VDLRGLDAEE…GDGVTMVELK (76 aa)).

This sequence belongs to the DNA mismatch repair MutS family. MutS2 subfamily. As to quaternary structure, homodimer. Binds to stalled ribosomes, contacting rRNA.

Functionally, endonuclease that is involved in the suppression of homologous recombination and thus may have a key role in the control of bacterial genetic diversity. Its function is as follows. Acts as a ribosome collision sensor, splitting the ribosome into its 2 subunits. Detects stalled/collided 70S ribosomes which it binds and splits by an ATP-hydrolysis driven conformational change. Acts upstream of the ribosome quality control system (RQC), a ribosome-associated complex that mediates the extraction of incompletely synthesized nascent chains from stalled ribosomes and their subsequent degradation. Probably generates substrates for RQC. The sequence is that of Endonuclease MutS2 from Clostridium beijerinckii (strain ATCC 51743 / NCIMB 8052) (Clostridium acetobutylicum).